We begin with the raw amino-acid sequence, 403 residues long: Indoleamine 2,3-dioxygenase 1 (403 aa).

His-346 provides a ligand contact to heme b. Residues Gln-360 to Gly-381 form a disordered region. Positions Lys-363–Ala-376 are enriched in basic and acidic residues.

This sequence belongs to the indoleamine 2,3-dioxygenase family. As to quaternary structure, monomer. Heme b is required as a cofactor. As to expression, expressed in mature dendritic cells located in lymphoid organs (including lymph nodes, spleen, tonsils, Peyers's patches, the gut lamina propria, and the thymic medulla), in some epithelial cells of the female genital tract, as well as in endothelial cells of term placenta and in lung parenchyma. Weakly or not expressed in most normal tissues, but mostly inducible in most tissues. Expressed in more than 50% of tumors, either by tumoral, stromal, or endothelial cells (expression in tumor is associated with a worse clinical outcome). Not overexpressed in tumor-draining lymph nodes.

The protein localises to the cytoplasm. Its subcellular location is the cytosol. The enzyme catalyses D-tryptophan + O2 = N-formyl-D-kynurenine. It catalyses the reaction L-tryptophan + O2 = N-formyl-L-kynurenine. Its pathway is amino-acid degradation; L-tryptophan degradation via kynurenine pathway; L-kynurenine from L-tryptophan: step 1/2. Activity is inhibited by and MTH-trp (methylthiohydantoin-DL-tryptophan), modestly inhibited by L-1MT (1-methyl-L-tryptophan) but not D-1MT (1-methyl-D-tryptophan). Catalyzes the first and rate limiting step of the catabolism of the essential amino acid tryptophan along the kynurenine pathway. Involved in the peripheral immune tolerance, contributing to maintain homeostasis by preventing autoimmunity or immunopathology that would result from uncontrolled and overreacting immune responses. Tryptophan shortage inhibits T lymphocytes division and accumulation of tryptophan catabolites induces T-cell apoptosis and differentiation of regulatory T-cells. Acts as a suppressor of anti-tumor immunity. Limits the growth of intracellular pathogens by depriving tryptophan. Protects the fetus from maternal immune rejection. The polypeptide is Indoleamine 2,3-dioxygenase 1 (Homo sapiens (Human)).